Consider the following 410-residue polypeptide: Peptidase T (410 aa).

H78 serves as a coordination point for Zn(2+). The active site involves D80. D140 lines the Zn(2+) pocket. Residue E174 is the Proton acceptor of the active site. Zn(2+) is bound by residues E175, D197, and H379.

It belongs to the peptidase M20B family. Zn(2+) is required as a cofactor.

The protein localises to the cytoplasm. The catalysed reaction is Release of the N-terminal residue from a tripeptide.. In terms of biological role, cleaves the N-terminal amino acid of tripeptides. The polypeptide is Peptidase T (Vibrio cholerae serotype O1 (strain ATCC 39315 / El Tor Inaba N16961)).